We begin with the raw amino-acid sequence, 450 residues long: Glucose-6-phosphate isomerase (450 aa).

The active-site Proton donor is Glu-291. Catalysis depends on residues His-312 and Lys-426.

It belongs to the GPI family.

The protein localises to the cytoplasm. It catalyses the reaction alpha-D-glucose 6-phosphate = beta-D-fructose 6-phosphate. Its pathway is carbohydrate biosynthesis; gluconeogenesis. The protein operates within carbohydrate degradation; glycolysis; D-glyceraldehyde 3-phosphate and glycerone phosphate from D-glucose: step 2/4. Functionally, catalyzes the reversible isomerization of glucose-6-phosphate to fructose-6-phosphate. The sequence is that of Glucose-6-phosphate isomerase from Clostridium perfringens (strain SM101 / Type A).